A 137-amino-acid chain; its full sequence is Large-conductance mechanosensitive channel (137 aa).

Transmembrane regions (helical) follow at residues 10–30 (FAMR…AAFG) and 76–96 (GVFL…FMAI).

It belongs to the MscL family. In terms of assembly, homopentamer.

The protein localises to the cell inner membrane. Channel that opens in response to stretch forces in the membrane lipid bilayer. May participate in the regulation of osmotic pressure changes within the cell. The protein is Large-conductance mechanosensitive channel of Erwinia tasmaniensis (strain DSM 17950 / CFBP 7177 / CIP 109463 / NCPPB 4357 / Et1/99).